A 177-amino-acid chain; its full sequence is Outer envelope pore protein 21, chloroplastic (177 aa).

Topologically, residues 1-21 (METSLRYGGDSKALKIHAKEK) are cytoplasmic. The chain crosses the membrane as a beta stranded span at residues 22-31 (LRIDTNTFFQ). At 32–55 (VRGGLDTKTGQPSSGSALIRHFYP) the chain is on the chloroplast intermembrane side. The beta stranded transmembrane segment at 56 to 65 (NFSATLGVGV) threads the bilayer. Residues 66-81 (RYDKQDSVGVRYAKND) are Cytoplasmic-facing. A beta stranded membrane pass occupies residues 82–91 (KLRYTVLAKK). Residues 92 to 97 (TFPVTN) are Chloroplast intermembrane-facing. A beta stranded transmembrane segment spans residues 98–107 (DGLVNFKIKG). Topologically, residues 108–120 (GCDVDQDFKEWKS) are cytoplasmic. The beta stranded transmembrane segment at 121 to 130 (RGGAEFSWNV) threads the bilayer. Residues 131–137 (FNFQKDQ) are Chloroplast intermembrane-facing. Residues 138–147 (DVRLRIGYEA) traverse the membrane as a beta stranded segment. Residues 148 to 152 (FEQVP) lie on the Cytoplasmic side of the membrane. Residues 153-162 (YLQIRENNWT) form a beta stranded membrane-spanning segment. Over 163-168 (FNADYK) the chain is Chloroplast intermembrane. Residues 169–177 (GRWNVRYDL) traverse the membrane as a beta stranded segment.

It belongs to the plastid outer envelope porin OEP21 (TC 1.B.29) family. In terms of tissue distribution, present in roots, shoots and leaves.

It localises to the plastid. The protein resides in the etioplast membrane. Its subcellular location is the chloroplast outer membrane. Voltage-dependent rectifying anion channel that facilitates the translocation between chloroplast and cytoplasm of phosphorylated carbohydrates such as triosephosphate, 3-phosphoglycerate and inorganic phosphate (Pi) depending of ATP to triosephosphate ratio in the plastidial intermembrane space; in high triosephosphate/ATP conditions (e.g. photosynthesis), export of triosphosphate from chloroplast (outward rectifying channels), but in high ATP/triosephosphate conditions (e.g. dark phase), import of phosphosolutes (inward rectifying channels). The chain is Outer envelope pore protein 21, chloroplastic (OEP21) from Pisum sativum (Garden pea).